Here is a 473-residue protein sequence, read N- to C-terminus: Bifunctional protein HldE (473 aa).

The interval 1–318 (MKLSMPRFDQ…RAVQREEGSE (318 aa)) is ribokinase. Position 194-197 (194-197 (NLGE)) interacts with ATP. Residue Asp-263 is part of the active site. The cytidylyltransferase stretch occupies residues 343-473 (FTNGCFDILH…TAIVEKIRKA (131 aa)).

This sequence in the N-terminal section; belongs to the carbohydrate kinase PfkB family. In the C-terminal section; belongs to the cytidylyltransferase family. As to quaternary structure, homodimer.

The catalysed reaction is D-glycero-beta-D-manno-heptose 7-phosphate + ATP = D-glycero-beta-D-manno-heptose 1,7-bisphosphate + ADP + H(+). The enzyme catalyses D-glycero-beta-D-manno-heptose 1-phosphate + ATP + H(+) = ADP-D-glycero-beta-D-manno-heptose + diphosphate. Its pathway is nucleotide-sugar biosynthesis; ADP-L-glycero-beta-D-manno-heptose biosynthesis; ADP-L-glycero-beta-D-manno-heptose from D-glycero-beta-D-manno-heptose 7-phosphate: step 1/4. The protein operates within nucleotide-sugar biosynthesis; ADP-L-glycero-beta-D-manno-heptose biosynthesis; ADP-L-glycero-beta-D-manno-heptose from D-glycero-beta-D-manno-heptose 7-phosphate: step 3/4. Catalyzes the phosphorylation of D-glycero-D-manno-heptose 7-phosphate at the C-1 position to selectively form D-glycero-beta-D-manno-heptose-1,7-bisphosphate. Functionally, catalyzes the ADP transfer from ATP to D-glycero-beta-D-manno-heptose 1-phosphate, yielding ADP-D-glycero-beta-D-manno-heptose. In Stutzerimonas stutzeri (strain A1501) (Pseudomonas stutzeri), this protein is Bifunctional protein HldE.